Here is a 429-residue protein sequence, read N- to C-terminus: Enolase (429 aa).

Position 162 (Q162) interacts with (2R)-2-phosphoglycerate. E204 (proton donor) is an active-site residue. Residues D241, E283, and D310 each contribute to the Mg(2+) site. Residues K335, R364, S365, and K386 each contribute to the (2R)-2-phosphoglycerate site. K335 functions as the Proton acceptor in the catalytic mechanism.

It belongs to the enolase family. Mg(2+) serves as cofactor.

It localises to the cytoplasm. The protein localises to the secreted. Its subcellular location is the cell surface. The enzyme catalyses (2R)-2-phosphoglycerate = phosphoenolpyruvate + H2O. It functions in the pathway carbohydrate degradation; glycolysis; pyruvate from D-glyceraldehyde 3-phosphate: step 4/5. Functionally, catalyzes the reversible conversion of 2-phosphoglycerate (2-PG) into phosphoenolpyruvate (PEP). It is essential for the degradation of carbohydrates via glycolysis. This Mycobacterium leprae (strain TN) protein is Enolase.